The sequence spans 503 residues: T-complex protein 11 homolog (503 aa).

Basic and acidic residues predominate over residues 1 to 22 (MPDVKESVPPKYPGDSEGRSCK). Disordered regions lie at residues 1–42 (MPDV…PPPF) and 254–285 (DLTM…NPEP). The segment covering 263–285 (PDTSDSSSVAGPSPNEAANNPEP) has biased composition (low complexity). The helical transmembrane segment at 330–349 (LTVMASVLLVASSFSGSVLF) threads the bilayer.

It belongs to the TCP11 family. Found in a complex at least composed of MROH2B, PRKACA isoform 2 and TCP11. Interacts with MROH2B. Interacts with PRKACA isoform 2. Isoform 2 and isoform 3 interact with ODF1 (via leucine zipper motif). In terms of processing, constitutively phosphorylated on serine, threonine and tyrosine residues within the head and tail regions of noncapacitated spermatozoa. Phosphorylation on tyrosine residues increases upon sperm capacitation within the acrosomal region in a protein kinase A (PKA)-dependent signaling pathway. As to expression, isoform 2 and isoform 3 are expressed in sperm. Isoform 1 is not detected in sperm (at protein level). Testis-specific. Isoform 1, isoform 2 and isoform 3 are expressed in sperm.

The protein resides in the membrane. Its subcellular location is the cell projection. It is found in the cilium. The protein localises to the flagellum. It localises to the cytoplasmic vesicle. The protein resides in the secretory vesicle. Its subcellular location is the acrosome. Plays a role in the process of sperm capacitation and acrosome reactions. Probable receptor for the putative fertilization-promoting peptide (FPP) at the sperm membrane that may modulate the activity of the adenylyl cyclase cAMP pathway. The chain is T-complex protein 11 homolog (TCP11) from Homo sapiens (Human).